A 384-amino-acid chain; its full sequence is Chorismate synthase (384 aa).

Residues arginine 40 and arginine 46 each coordinate NADP(+). FMN contacts are provided by residues 128–130, glycine 292, 307–311, and arginine 333; these read RAS and KPIPT.

Belongs to the chorismate synthase family. In terms of assembly, homotetramer. Requires FMNH2 as cofactor.

It carries out the reaction 5-O-(1-carboxyvinyl)-3-phosphoshikimate = chorismate + phosphate. It functions in the pathway metabolic intermediate biosynthesis; chorismate biosynthesis; chorismate from D-erythrose 4-phosphate and phosphoenolpyruvate: step 7/7. Functionally, catalyzes the anti-1,4-elimination of the C-3 phosphate and the C-6 proR hydrogen from 5-enolpyruvylshikimate-3-phosphate (EPSP) to yield chorismate, which is the branch point compound that serves as the starting substrate for the three terminal pathways of aromatic amino acid biosynthesis. This reaction introduces a second double bond into the aromatic ring system. This Carboxydothermus hydrogenoformans (strain ATCC BAA-161 / DSM 6008 / Z-2901) protein is Chorismate synthase.